A 572-amino-acid chain; its full sequence is Proline--tRNA ligase (572 aa).

The protein belongs to the class-II aminoacyl-tRNA synthetase family. ProS type 1 subfamily. In terms of assembly, homodimer.

It localises to the cytoplasm. The catalysed reaction is tRNA(Pro) + L-proline + ATP = L-prolyl-tRNA(Pro) + AMP + diphosphate. Functionally, catalyzes the attachment of proline to tRNA(Pro) in a two-step reaction: proline is first activated by ATP to form Pro-AMP and then transferred to the acceptor end of tRNA(Pro). As ProRS can inadvertently accommodate and process non-cognate amino acids such as alanine and cysteine, to avoid such errors it has two additional distinct editing activities against alanine. One activity is designated as 'pretransfer' editing and involves the tRNA(Pro)-independent hydrolysis of activated Ala-AMP. The other activity is designated 'posttransfer' editing and involves deacylation of mischarged Ala-tRNA(Pro). The misacylated Cys-tRNA(Pro) is not edited by ProRS. The sequence is that of Proline--tRNA ligase from Yersinia pestis (strain Pestoides F).